The following is a 1358-amino-acid chain: Probable aldehyde oxidase 1 (1358 aa).

Residues 4–91 form the 2Fe-2S ferredoxin-type domain; the sequence is AAAVVAVNGE…HCAVTTSEGI (88 aa). Residues Cys43, Cys48, Cys51, and Cys73 each coordinate [2Fe-2S] cluster. The region spanning 236–418 is the FAD-binding PCMH-type domain; sequence AVTGDGCWFH…ISISIPDWCS (183 aa). A disordered region spans residues 540–567; it reads KPENANNVPNGSCTTNGTTNGSAESTVD. Residues 549–561 show a composition bias toward low complexity; it reads NGSCTTNGTTNGS.

It belongs to the xanthine dehydrogenase family. Aldehyde oxidases (AO) are homodimers and heterodimers of AO subunits. Requires [2Fe-2S] cluster as cofactor. The cofactor is FAD. Mo-molybdopterin is required as a cofactor.

The enzyme catalyses an aldehyde + O2 + H2O = a carboxylate + H2O2 + H(+). This Oryza sativa subsp. japonica (Rice) protein is Probable aldehyde oxidase 1.